Reading from the N-terminus, the 416-residue chain is Adipocyte plasma membrane-associated protein (416 aa).

Topologically, residues 1–39 are cytoplasmic; that stretch reads MNEPEGLRFRRLNRPQIITDELQEPQYKGTSTYSGKVFR. A helical transmembrane segment spans residues 40–60; it reads VILVTLGGCLILPLLVVFFLL. Topologically, residues 61–412 are extracellular; that stretch reads ESPIHPELLS…FRSPYLCKLD (352 aa). Asn-160 carries an N-linked (GlcNAc...) asparagine glycan.

Belongs to the strictosidine synthase family.

It localises to the membrane. This Salmo salar (Atlantic salmon) protein is Adipocyte plasma membrane-associated protein (apmap).